We begin with the raw amino-acid sequence, 419 residues long: Cytosine permease (419 aa).

Over 1–19 (MSQDNNFSQGPVPQSARKG) the chain is Cytoplasmic. Residues 20-39 (VLALTFVMLGLTFFSASMWT) form a helical membrane-spanning segment. Residues 40–51 (GGTLGTGLSYHD) are Periplasmic-facing. A helical membrane pass occupies residues 52–71 (FFLAVLIGNLLLGIYTSFLG). The Cytoplasmic portion of the chain corresponds to 72–100 (YIGAKTGLTTHLLARFSFGVKGSWLPSLL). Residues 101–120 (LGGTQVGWFGVGVAMFAIPV) traverse the membrane as a helical segment. Residues 121–127 (GKATGLD) lie on the Periplasmic side of the membrane. A helical transmembrane segment spans residues 128 to 147 (INLLIAVSGLLMTVTVFFGI). The Cytoplasmic segment spans residues 148–152 (SALTV). The chain crosses the membrane as a helical span at residues 153–172 (LSLIAVPAIACLGGYSVWLA). Over 173–192 (VNGMGGLDALKAVVPAQPLD) the chain is Periplasmic. A helical membrane pass occupies residues 193–212 (FNVALALVVGSFISAGTLTA). The Cytoplasmic segment spans residues 213-221 (DFVRFGRNA). Residues 222 to 242 (KLAVLVAMVAFFLGNSLMFIF) traverse the membrane as a helical segment. At 243–257 (GAAGAAALGMADISD) the chain is on the periplasmic side. The chain crosses the membrane as a helical span at residues 258–277 (VMIAQGLLLPAIVVLGLNIW). The Cytoplasmic segment spans residues 278–300 (TTNDNALYASGLGFANITGMSSK). A helical membrane pass occupies residues 301 to 320 (TLSVINGIIGTVCALWLYNN). Position 321 (Phe321) is a topological domain, periplasmic. The chain crosses the membrane as a helical span at residues 322-341 (VGWLTFLSAAIPPVGGVIIA). At 342–358 (DYLMNRRRYEHFATTRM) the chain is on the cytoplasmic side. A helical membrane pass occupies residues 359–378 (MSVNWVAILAVALGIAAGHW). Residues 379 to 380 (LP) are Periplasmic-facing. Residues 381–400 (GIVPVNAVLGGALSYLILNP) form a helical membrane-spanning segment. The Cytoplasmic segment spans residues 401-419 (ILNRKTTAAMTHVEANSVE).

This sequence belongs to the purine-cytosine permease (2.A.39) family.

The protein resides in the cell inner membrane. Functionally, required for cytosine transport into the cell. The protein is Cytosine permease (codB) of Escherichia coli O157:H7.